Here is a 754-residue protein sequence, read N- to C-terminus: 5-methyltetrahydropteroyltriglutamate--homocysteine methyltransferase (754 aa).

5-methyltetrahydropteroyltri-L-glutamate-binding positions include 17-20 and Lys117; that span reads RELK. Residues 431 to 433 and Glu484 each bind L-homocysteine; that span reads IGS. Residues 431–433 and Glu484 contribute to the L-methionine site; that span reads IGS. 5-methyltetrahydropteroyltri-L-glutamate-binding positions include 515-516 and Trp561; that span reads RC. Residue Asp599 participates in L-homocysteine binding. Asp599 serves as a coordination point for L-methionine. 5-methyltetrahydropteroyltri-L-glutamate is bound at residue Glu605. Residues His641, Cys643, and Glu665 each coordinate Zn(2+). Residue His694 is the Proton donor of the active site. Zn(2+) is bound at residue Cys726.

Belongs to the vitamin-B12 independent methionine synthase family. Zn(2+) is required as a cofactor.

It carries out the reaction 5-methyltetrahydropteroyltri-L-glutamate + L-homocysteine = tetrahydropteroyltri-L-glutamate + L-methionine. It functions in the pathway amino-acid biosynthesis; L-methionine biosynthesis via de novo pathway; L-methionine from L-homocysteine (MetE route): step 1/1. Functionally, catalyzes the transfer of a methyl group from 5-methyltetrahydrofolate to homocysteine resulting in methionine formation. This Salmonella enteritidis PT4 (strain P125109) protein is 5-methyltetrahydropteroyltriglutamate--homocysteine methyltransferase.